Here is a 263-residue protein sequence, read N- to C-terminus: MRLIIEPDYDKLSTWAADYVIERIHKAAPTAEKPFVLGLPTGSSPIGMYRELVKACKEGCISFRHVITFNMDEYVGLATEHPESYHSFMHRHLFDHIDILPQNIHILNGNAPDLTAECDAYERAIEAAGGIDLFIGGIGPDGHIAFNEPGSSLTSRTRIKTLTTDTVLANSRFFDNDTNQVPKRALTVGVGTIMDAREVMILVNGHTKARALREAVEGAVSQMWTITALQLHRQSIIVCDEAACVELKVGTYNYFKDIERNNL.

The Proton acceptor; for enolization step role is filled by Asp-72. Catalysis depends on Asp-141, which acts as the For ring-opening step. His-143 acts as the Proton acceptor; for ring-opening step in catalysis. Catalysis depends on Glu-148, which acts as the For ring-opening step.

This sequence belongs to the glucosamine/galactosamine-6-phosphate isomerase family. NagB subfamily.

The enzyme catalyses alpha-D-glucosamine 6-phosphate + H2O = beta-D-fructose 6-phosphate + NH4(+). It functions in the pathway amino-sugar metabolism; N-acetylneuraminate degradation; D-fructose 6-phosphate from N-acetylneuraminate: step 5/5. Its activity is regulated as follows. Allosterically activated by N-acetylglucosamine 6-phosphate (GlcNAc6P). Its function is as follows. Catalyzes the reversible isomerization-deamination of glucosamine 6-phosphate (GlcN6P) to form fructose 6-phosphate (Fru6P) and ammonium ion. The chain is Glucosamine-6-phosphate deaminase from Porphyromonas gingivalis (strain ATCC 33277 / DSM 20709 / CIP 103683 / JCM 12257 / NCTC 11834 / 2561).